Consider the following 106-residue polypeptide: Terpredoxin (106 aa).

One can recognise a 2Fe-2S ferredoxin-type domain in the interval 2-106 (PRVVFIDEQS…GLIVRVPLPA (105 aa)). [2Fe-2S] cluster-binding residues include C40, C46, C49, and C87.

This sequence belongs to the adrenodoxin/putidaredoxin family. Requires [2Fe-2S] cluster as cofactor.

The oxidation of alpha-terpineol by cytochrome p450-TERP requires the participation of a flavoprotein, terpredoxin reductase, and an iron-sulfur protein, terpredoxin, to mediate the transfer of electrons from NADH to P450 for oxygen activation. The chain is Terpredoxin (terPB) from Pseudomonas sp.